The chain runs to 225 residues: Cytidylate kinase (225 aa).

11–19 (GPAAAGKST) is an ATP binding site.

It belongs to the cytidylate kinase family. Type 1 subfamily.

It localises to the cytoplasm. The enzyme catalyses CMP + ATP = CDP + ADP. It carries out the reaction dCMP + ATP = dCDP + ADP. The chain is Cytidylate kinase from Bacillus cereus (strain ATCC 10987 / NRS 248).